Here is a 257-residue protein sequence, read N- to C-terminus: Probable transcriptional regulatory protein SRU_2667 (257 aa).

Residues 1-15 show a composition bias toward basic residues; it reads MAGHTRKWAKVKRKK. The tract at residues 1-25 is disordered; the sequence is MAGHTRKWAKVKRKKQKDDRRKSKV.

This sequence belongs to the TACO1 family.

It localises to the cytoplasm. This Salinibacter ruber (strain DSM 13855 / M31) protein is Probable transcriptional regulatory protein SRU_2667.